Consider the following 406-residue polypeptide: MKLPIYLDYAATTPMDERVVQKMMQYMTKDGIFGNPASRSHKFGWEAEEAVDIARNHIADLIGADSREIVFTSGATESDNLAIKGAAHFYQTKGKHIITLKTEHKAVLDTCRQLEREGFEVTYLEPESDGLLDLTKLVEAIRPDTILISIMHVNNEIGVVQDIKAIGEICRARKIIFHVDATQSVGKLAVNVQELKVDLMSFSSHKLYGPKGIGGLYVCRKPRIRIEAIIHGGGHERGMRSGTLPVHQIVGMGEAYRIAKEEMATEMPRLKALRDRLYHGFQAIEEVYVNGSMEEGKRVDTNLNMSFNFVEGESLMMALRDIAVSSGSACTSASLEPSYVLRAIGRNDELAHSSIRFSLGRWATEEEIDYTIELVKKSILKLRELSPLWEMFKEGIDLSKIEWNHH.

Pyridoxal 5'-phosphate contacts are provided by residues 75 to 76 (AT), N155, Q183, and 203 to 205 (SSH). At K206 the chain carries N6-(pyridoxal phosphate)lysine. Pyridoxal 5'-phosphate is bound at residue T243. C330 serves as the catalytic Cysteine persulfide intermediate. C330 lines the [2Fe-2S] cluster pocket.

Belongs to the class-V pyridoxal-phosphate-dependent aminotransferase family. NifS/IscS subfamily. As to quaternary structure, homodimer. Forms a heterotetramer with IscU, interacts with other sulfur acceptors. It depends on pyridoxal 5'-phosphate as a cofactor.

The protein resides in the cytoplasm. The enzyme catalyses (sulfur carrier)-H + L-cysteine = (sulfur carrier)-SH + L-alanine. Its pathway is cofactor biosynthesis; iron-sulfur cluster biosynthesis. In terms of biological role, master enzyme that delivers sulfur to a number of partners involved in Fe-S cluster assembly, tRNA modification or cofactor biosynthesis. Catalyzes the removal of elemental sulfur atoms from cysteine to produce alanine. Functions as a sulfur delivery protein for Fe-S cluster synthesis onto IscU, an Fe-S scaffold assembly protein, as well as other S acceptor proteins. The sequence is that of Cysteine desulfurase IscS from Haemophilus ducreyi (strain 35000HP / ATCC 700724).